We begin with the raw amino-acid sequence, 130 residues long: MIGNWNYGTGRRKSAVARVFIKAGKGDIIVNGKPIADYFSRETSLMIVRQPLELTNHAQTFDIKVNVTGGGETGQAGAVRHGITRALIDYDATLKPSLSNAGFVTRDAREVERKKVGLHKARRAKQFSKR.

This sequence belongs to the universal ribosomal protein uS9 family.

The chain is Small ribosomal subunit protein uS9 from Burkholderia thailandensis (strain ATCC 700388 / DSM 13276 / CCUG 48851 / CIP 106301 / E264).